The primary structure comprises 122 residues: Large ribosomal subunit protein uL14 (122 aa).

The protein belongs to the universal ribosomal protein uL14 family. In terms of assembly, part of the 50S ribosomal subunit. Forms a cluster with proteins L3 and L19. In the 70S ribosome, L14 and L19 interact and together make contacts with the 16S rRNA in bridges B5 and B8.

Functionally, binds to 23S rRNA. Forms part of two intersubunit bridges in the 70S ribosome. In Geobacillus thermodenitrificans (strain NG80-2), this protein is Large ribosomal subunit protein uL14.